The primary structure comprises 86 residues: V-type proton ATPase subunit e (86 aa).

Residues 1–21 (MGILIPLVSVSAFWAIIGFGG) form a helical membrane-spanning segment. At 22–32 (PWIVPKGPNRG) the chain is on the cytoplasmic side. Residues 33-53 (IIQLMIIMTAVCCWMFWIMVF) traverse the membrane as a helical segment. Residues 54–86 (LHQLNPLIGPQINVKTIRWISEKWGDAPNVINN) lie on the Lumenal side of the membrane.

The protein belongs to the V-ATPase e1/e2 subunit family. In terms of assembly, V-ATPase is a heteromultimeric enzyme made up of two complexes: the ATP-hydrolytic V1 complex and the proton translocation V0 complex. The V1 complex consists of three catalytic AB heterodimers that form a heterohexamer, three peripheral stalks each consisting of EG heterodimers, one central rotor including subunits D and F, and the regulatory subunits C and H. The proton translocation complex V0 consists of the proton transport subunit a, a ring of proteolipid subunits c9c'', rotary subunit d, subunits e and f, and the accessory subunits vah-19/Ac45 and vah-20/PRR.

The protein localises to the apical cell membrane. Its function is as follows. Subunit of the V0 complex of vacuolar(H+)-ATPase (V-ATPase), a multisubunit enzyme composed of a peripheral complex (V1) that hydrolyzes ATP and a membrane integral complex (V0) that translocates protons. V-ATPase is responsible for acidifying and maintaining the pH of intracellular compartments and in some cell types, is targeted to the plasma membrane, where it is responsible for acidifying the extracellular environment. During embryonic development, the V-ATPase is required to repress fusion of epidermal cells probably by negatively regulating eff-1-mediated cell fusion. This Caenorhabditis elegans protein is V-type proton ATPase subunit e.